The chain runs to 247 residues: O-methyltransferase imqG (247 aa).

S-adenosyl-L-methionine-binding positions include glutamate 84, 86–87 (GT), and alanine 138. Residues aspartate 163, aspartate 189, and asparagine 190 each coordinate a divalent metal cation. Aspartate 163 is a substrate binding site.

Belongs to the class I-like SAM-binding methyltransferase superfamily. Cation-dependent O-methyltransferase family. CCoAMT subfamily. Homodimer. The cofactor is a divalent metal cation.

Its pathway is secondary metabolite biosynthesis. Its function is as follows. O-methyltransferase; part of the gene cluster that mediates the biosynthesis of imizoquins A to D, tripeptide-derived alkaloids that serve a protective role against oxidative stress that are essential for normal germination. ImqB is a canonical three-module NRPS that assembles the tripeptide backbone of the imizoquins via condensation of Trp, Tyr, and Leu-derived precursors. N-methylation by imqF and phenol oxidation by imqC, followed by cyclization via the FAD-dependent oxidase imqH carry out the three-step transformation of L-tyrosine into tetrahydroisoquinoline. Importantly, this sequence requires the presence of a free amine in the tyrosine moiety, indicating that isoquinoline formation occurs prior to peptide bond formation. The imidazolidin-4-one ring of imizoquins could form following additional oxidation of the methyl-derived bridgehead carbon by imqH. Lastly, O-methylation by imqG and leucine hydroxylation by imqE complete biosynthesis of the imizoquins. The polypeptide is O-methyltransferase imqG (Aspergillus flavus (strain ATCC 200026 / FGSC A1120 / IAM 13836 / NRRL 3357 / JCM 12722 / SRRC 167)).